The following is a 278-amino-acid chain: MKTKTDFLKMKEQGEPITMLTAYDYPSAKLAEEAEVDMILVGDSLGMVVLGYDSTVPVTVEDMIHHTKAVRRGAKETFIVTDMPFMSYHVSLQETMVNARRIVQESGAHALKVEGAGEVISTIQYLTNAGIPVVAHLGLTPQSVGVLGGYKVQGKDAESAKKLIEDAKKCEEAGAIALVLECVPMQLAELISEQLTIPTIGIGAGQKVDGQVLVYHDLISYGVNRVPKFVKQYTSVQEEIVRGISQYVTEVKTRQFPEEKHSFTMKEEECLVLYGGKQ.

Positions 43 and 82 each coordinate Mg(2+). Residues 43 to 44 (DS), Asp-82, and Lys-112 contribute to the 3-methyl-2-oxobutanoate site. Mg(2+) is bound at residue Glu-114. Glu-181 (proton acceptor) is an active-site residue.

It belongs to the PanB family. In terms of assembly, homodecamer; pentamer of dimers. Mg(2+) is required as a cofactor.

It is found in the cytoplasm. It catalyses the reaction 3-methyl-2-oxobutanoate + (6R)-5,10-methylene-5,6,7,8-tetrahydrofolate + H2O = 2-dehydropantoate + (6S)-5,6,7,8-tetrahydrofolate. It functions in the pathway cofactor biosynthesis; (R)-pantothenate biosynthesis; (R)-pantoate from 3-methyl-2-oxobutanoate: step 1/2. Functionally, catalyzes the reversible reaction in which hydroxymethyl group from 5,10-methylenetetrahydrofolate is transferred onto alpha-ketoisovalerate to form ketopantoate. In Bacillus cereus (strain B4264), this protein is 3-methyl-2-oxobutanoate hydroxymethyltransferase.